We begin with the raw amino-acid sequence, 290 residues long: UBX domain-containing protein 1-B (290 aa).

A UBA domain is found at 1 to 42; the sequence is MADCSALESLIEMGFSPSRAEKALSATGNQGIEPAMDWLVEH. The segment at 49-210 is disordered; sequence KEPSVVIPED…VQEPPTKKEY (162 aa). Basic and acidic residues-rich tracts occupy residues 80-117 and 132-172; these read PLTEEEKEKQTKRMMELIAQKQKEREEREKRERIEQEK and RMQE…DRAR. The stretch at 81–171 forms a coiled coil; sequence LTEEEKEKQT…KIARDKADRA (91 aa). Residues 185–201 show a composition bias toward low complexity; sequence PAETSVPATAPSPSSPV. One can recognise a UBX domain in the interval 208–287; the sequence is KEYDQCRIQV…GLVPTAVLIV (80 aa).

The protein localises to the cytoplasm. Component of a complex required to couple deglycosylation and proteasome-mediated degradation of misfolded proteins in the endoplasmic reticulum that are retrotranslocated in the cytosol. Involved in ubiquitin-proteasome systems. The protein is UBX domain-containing protein 1-B (ubxn1-b) of Xenopus laevis (African clawed frog).